The primary structure comprises 455 residues: Nuclear receptor subfamily 6 group A member 1-B (455 aa).

The nuclear receptor DNA-binding region spans 38–113 (ERWCLICGDR…MGMNRKAIRE (76 aa)). 2 NR C4-type zinc fingers span residues 41–61 (CLIC…CEGC) and 77–96 (CNRD…CQYC). Positions 145–173 (EGSDLSDSWSHGYSNHSSPGNSLSEGGQS) are disordered. The span at 149 to 165 (LSDSWSHGYSNHSSPGN) shows a compositional bias: polar residues. An NR LBD domain is found at 215–446 (QTHTLTGQIL…YSCTTNQNPW (232 aa)).

It belongs to the nuclear hormone receptor family. NR6 subfamily. In terms of assembly, homodimer.

The protein localises to the nucleus. In terms of biological role, probable orphan nuclear receptor. Binds to a response element containing repeats of the motif 5'-AGGTCA-3'. The polypeptide is Nuclear receptor subfamily 6 group A member 1-B (Danio rerio (Zebrafish)).